We begin with the raw amino-acid sequence, 383 residues long: Schlafen-like protein 3 (383 aa).

An SLFN-like fold region spans residues 118–266 (FDYQSNFSDV…SDKVYQISSG (149 aa)). The chain crosses the membrane as a helical span at residues 354–374 (LLDIQNIGWIFFGTALSFCIY).

The protein belongs to the Schlafen family. Component of the PUCH (precursor of 21U RNA 5'-end cleavage holoenzyme) complex; consisting of tofu-1, tofu-2 and either slfl-3 or slfl-4. Within the complex, interacts (via N-terminus) with tofu-2 (via N-terminus); the presence of tofu-1 is required for the interaction.

The protein localises to the mitochondrion membrane. Functionally, component of the trimeric PUCH (precursor of 21U RNA 5'-end cleavage holoenzyme) complex, that acts as an endoribonuclease processing the 5'-end of precursor Piwi-interacting RNAs (piRNAs). The PUCH complex consists of tofu-1, tofu-2 and either slfl-3 or slfl-4, where tofu-2 exhibits endoribonuclease activity. PUCH-mediated processing strictly requires a 7-methyl-G cap (m7 G-cap) and an uracil at position three (U3). PUCH also exhibits a strict bias for piRNA precursors with an A or G at position 1. Mature piRNA production is enhanced by the interaction of PUCH with the PETISCO complex, which is stabilizing piRNA precursors and allows their processing by PUCH. The polypeptide is Schlafen-like protein 3 (Caenorhabditis elegans).